Here is a 227-residue protein sequence, read N- to C-terminus: MAYTFQLGLQDATSPIMEELTNFHDHTLMIVFLISSLVLYVISLMLTTKLTHTNTMDAQEVETIWTILPAVILILIALPSLRILYMMDEINNPVLTVKTMGHQWYWSYEYTDYEDLCFDSYMIPTNDLKPGELRLLEVDNRVVLPMELPIRMLISSEDVLHSWAVPSLGLKTDAIPGRLNQATVTSNRPGLFYGQCSEICGSNHSFMPIVLEMVPLKHFENWSASMI.

At 1–14 (MAYTFQLGLQDATS) the chain is on the mitochondrial intermembrane side. A helical membrane pass occupies residues 15–45 (PIMEELTNFHDHTLMIVFLISSLVLYVISLM). The Mitochondrial matrix portion of the chain corresponds to 46 to 59 (LTTKLTHTNTMDAQ). Residues 60 to 87 (EVETIWTILPAVILILIALPSLRILYMM) traverse the membrane as a helical segment. The Mitochondrial intermembrane segment spans residues 88 to 227 (DEINNPVLTV…HFENWSASMI (140 aa)). Cu cation is bound by residues His161, Cys196, Glu198, Cys200, His204, and Met207. Glu198 contributes to the Mg(2+) binding site.

This sequence belongs to the cytochrome c oxidase subunit 2 family. As to quaternary structure, component of the cytochrome c oxidase (complex IV, CIV), a multisubunit enzyme composed of 14 subunits. The complex is composed of a catalytic core of 3 subunits MT-CO1, MT-CO2 and MT-CO3, encoded in the mitochondrial DNA, and 11 supernumerary subunits COX4I, COX5A, COX5B, COX6A, COX6B, COX6C, COX7A, COX7B, COX7C, COX8 and NDUFA4, which are encoded in the nuclear genome. The complex exists as a monomer or a dimer and forms supercomplexes (SCs) in the inner mitochondrial membrane with NADH-ubiquinone oxidoreductase (complex I, CI) and ubiquinol-cytochrome c oxidoreductase (cytochrome b-c1 complex, complex III, CIII), resulting in different assemblies (supercomplex SCI(1)III(2)IV(1) and megacomplex MCI(2)III(2)IV(2)). Found in a complex with TMEM177, COA6, COX18, COX20, SCO1 and SCO2. Interacts with TMEM177 in a COX20-dependent manner. Interacts with COX20. Interacts with COX16. Requires Cu cation as cofactor.

The protein resides in the mitochondrion inner membrane. It catalyses the reaction 4 Fe(II)-[cytochrome c] + O2 + 8 H(+)(in) = 4 Fe(III)-[cytochrome c] + 2 H2O + 4 H(+)(out). Component of the cytochrome c oxidase, the last enzyme in the mitochondrial electron transport chain which drives oxidative phosphorylation. The respiratory chain contains 3 multisubunit complexes succinate dehydrogenase (complex II, CII), ubiquinol-cytochrome c oxidoreductase (cytochrome b-c1 complex, complex III, CIII) and cytochrome c oxidase (complex IV, CIV), that cooperate to transfer electrons derived from NADH and succinate to molecular oxygen, creating an electrochemical gradient over the inner membrane that drives transmembrane transport and the ATP synthase. Cytochrome c oxidase is the component of the respiratory chain that catalyzes the reduction of oxygen to water. Electrons originating from reduced cytochrome c in the intermembrane space (IMS) are transferred via the dinuclear copper A center (CU(A)) of subunit 2 and heme A of subunit 1 to the active site in subunit 1, a binuclear center (BNC) formed by heme A3 and copper B (CU(B)). The BNC reduces molecular oxygen to 2 water molecules using 4 electrons from cytochrome c in the IMS and 4 protons from the mitochondrial matrix. In Niviventer culturatus (Oldfield white-bellied rat), this protein is Cytochrome c oxidase subunit 2 (MT-CO2).